A 265-amino-acid polypeptide reads, in one-letter code: MNSPIDPAIVMPDVQSSADTRHIQIQRVGIRGVRHPMLVVAGDGSAQATVANWTLTVALPAEEKGTHMSRFVALLEKYRATPMTPALFSQMAREMLPLLHAERGDLTAAFPYFINKSAPVSGVQSLLDYEVIWTARAAGDEVEFELRVQVPVTSLCPCSKAISEYGAHNQRSHVTVSAVMEGDVAMDAIIRLVEDEGSCELWGLLKRPDEKYVTERAYDNPKFVEDLVRDVAARLKAHPSVARFCVEAENFESIHNHSAYAVVEG.

This sequence belongs to the GTP cyclohydrolase IV family.

The catalysed reaction is GTP + H2O = 7,8-dihydroneopterin 3'-triphosphate + formate + H(+). Its pathway is cofactor biosynthesis; 7,8-dihydroneopterin triphosphate biosynthesis; 7,8-dihydroneopterin triphosphate from GTP: step 1/1. Converts GTP to 7,8-dihydroneopterin triphosphate. In Bordetella avium (strain 197N), this protein is GTP cyclohydrolase FolE2.